Here is a 215-residue protein sequence, read N- to C-terminus: Endoplasmic reticulum vesicle protein 25 (215 aa).

Positions 1–21 (MQSLITYIALVFSLFVSSAIG) are cleaved as a signal peptide. Over 22 to 184 (LHLEVPALPN…TNESTNSRVK (163 aa)) the chain is Lumenal. The 92-residue stretch at 34-125 (PVCIRDFVQE…VRSVELDIES (92 aa)) folds into the GOLD domain. The helical transmembrane segment at 185–205 (WFSIVVIASLVGFGVWQIQYL) threads the bilayer. Over 206–215 (RHYFKVKHII) the chain is Cytoplasmic.

The protein belongs to the EMP24/GP25L family.

It localises to the endoplasmic reticulum membrane. The protein resides in the golgi apparatus membrane. Functionally, constituent of COPII-coated endoplasmic reticulum-derived transport vesicles. Required for efficient transport of a subset of secretory proteins to the Golgi. Facilitates retrograde transport from the Golgi to the endoplasmic reticulum. The protein is Endoplasmic reticulum vesicle protein 25 (ERV25) of Candida albicans (strain SC5314 / ATCC MYA-2876) (Yeast).